The following is a 381-amino-acid chain: Nitric oxide reductase FlRd-NAD(+) reductase (381 aa).

Belongs to the FAD-dependent oxidoreductase family. FAD serves as cofactor.

The protein localises to the cytoplasm. The enzyme catalyses 2 reduced [nitric oxide reductase rubredoxin domain] + NAD(+) + H(+) = 2 oxidized [nitric oxide reductase rubredoxin domain] + NADH. It participates in nitrogen metabolism; nitric oxide reduction. Its function is as follows. One of at least two accessory proteins for anaerobic nitric oxide (NO) reductase. Reduces the rubredoxin moiety of NO reductase. The sequence is that of Nitric oxide reductase FlRd-NAD(+) reductase from Aliivibrio fischeri (strain ATCC 700601 / ES114) (Vibrio fischeri).